A 372-amino-acid chain; its full sequence is MNIKKVNLLDLNREGLRAFFVELGEKPFRAEQVMKWIYHYGCEDFDLMSNVNKKLRQKLKECAEIVAPEIKVEQRSNDGTIKWAMTVGDQEVETVYIPEKDRATLCISSQVGCVLACNFCSTAQQGFNRNLSVSEIIGQVWRAAKIVGVTGESGKRPITNVVMMGMGEPLLNLNNLIPAMELMLDDFGYALSKRRVTVSTSGVVPALDILGDRIDVSLAISLHAANDTLRSQMMPINDKYNIADFLAGVKRYIAKSKANRGKVYIEYLLLDHFNDSTDQAHELAILLKDTPCKINLIPFNPFPGNDYQKPSNSRVDRFNKVLMEYGYTVTVRKTRGDDIDAACGQLVGDVIDRTKRTMKKRLQGENIAISAG.

The active-site Proton acceptor is the glutamate 93. A Radical SAM core domain is found at 99 to 338 (EKDRATLCIS…VTVRKTRGDD (240 aa)). An intrachain disulfide couples cysteine 106 to cysteine 343. Cysteine 113, cysteine 117, and cysteine 120 together coordinate [4Fe-4S] cluster. S-adenosyl-L-methionine-binding positions include 167–168 (GE), serine 199, 221–223 (SLH), and asparagine 300. Residue cysteine 343 is the S-methylcysteine intermediate of the active site.

The protein belongs to the radical SAM superfamily. RlmN family. [4Fe-4S] cluster serves as cofactor.

The protein resides in the cytoplasm. It catalyses the reaction adenosine(2503) in 23S rRNA + 2 reduced [2Fe-2S]-[ferredoxin] + 2 S-adenosyl-L-methionine = 2-methyladenosine(2503) in 23S rRNA + 5'-deoxyadenosine + L-methionine + 2 oxidized [2Fe-2S]-[ferredoxin] + S-adenosyl-L-homocysteine. The enzyme catalyses adenosine(37) in tRNA + 2 reduced [2Fe-2S]-[ferredoxin] + 2 S-adenosyl-L-methionine = 2-methyladenosine(37) in tRNA + 5'-deoxyadenosine + L-methionine + 2 oxidized [2Fe-2S]-[ferredoxin] + S-adenosyl-L-homocysteine. In terms of biological role, specifically methylates position 2 of adenine 2503 in 23S rRNA and position 2 of adenine 37 in tRNAs. m2A2503 modification seems to play a crucial role in the proofreading step occurring at the peptidyl transferase center and thus would serve to optimize ribosomal fidelity. The polypeptide is Dual-specificity RNA methyltransferase RlmN (Psychromonas ingrahamii (strain DSM 17664 / CCUG 51855 / 37)).